The sequence spans 161 residues: Non-specific lipid transfer protein GPI-anchored 24 (161 aa).

Residues 1–23 form the signal peptide; sequence MAQTTTLILLLATLLVAATTVSG. 4 disulfides stabilise this stretch: Cys42/Cys79, Cys49/Cys63, Cys64/Cys104, and Cys77/Cys113. An N-linked (GlcNAc...) asparagine glycan is attached at Asn92. The GPI-anchor amidated aspartate moiety is linked to residue Asp138. Positions 139–161 are cleaved as a propeptide — removed in mature form; it reads AASKLAGTGLVGIVVITIAAMFY.

This sequence belongs to the plant LTP family.

The protein resides in the cell membrane. Functionally, probable lipid transfer protein. This chain is Non-specific lipid transfer protein GPI-anchored 24, found in Arabidopsis thaliana (Mouse-ear cress).